We begin with the raw amino-acid sequence, 569 residues long: Cationic amino acid transporter 5 (569 aa).

Residues 1–67 (MEGEERGYWR…KQSEHEMKRC (67 aa)) are Cytoplasmic-facing. The chain crosses the membrane as a helical span at residues 68-88 (LTWWDLVWFGFGSVIGAGIFV). At 89 to 97 (LTGQEAHEQ) the chain is on the extracellular side. A helical transmembrane segment spans residues 98 to 118 (AGPAIVLSYVVSGLSAMLSVF). The Cytoplasmic segment spans residues 119–143 (CYTEFAVEIPVAGGSFAYLRIELGD). A helical membrane pass occupies residues 144 to 164 (FAAFITAGNILLESIVGTAAV). The Extracellular portion of the chain corresponds to 165 to 192 (ARAWTSYFATLLNRSPNALRIKTDLSSG). Residues 193–213 (FNLLDPIAVVVIAASATIASI) traverse the membrane as a helical segment. Residues 214-222 (STRKTSLLN) are Cytoplasmic-facing. The helical transmembrane segment at 223-243 (WIASAINTLVIFFVIIAGFIH) threads the bilayer. At 244–251 (ADTSNLTP) the chain is on the extracellular side. Residues 252-272 (FLPFGPEGVFRAAAVVYFAYG) traverse the membrane as a helical segment. The Cytoplasmic portion of the chain corresponds to 273–290 (GFDSIATMAEETKNPSRD). A helical transmembrane segment spans residues 291-311 (IPIGLLGSMSIITVIYCLMAL). Topologically, residues 312 to 341 (SLSMMQKYTDIDPNAAYSVAFQSVGMKWGK) are extracellular. Residues 342–362 (YLVALGALKGMTTVLLVGALG) traverse the membrane as a helical segment. The Cytoplasmic portion of the chain corresponds to 363–389 (QARYVTHIARTHMIPPIFALVHPKTGT). The chain crosses the membrane as a helical span at residues 390–410 (PINANLLVAIPSALIAFFSGL). Position 411 (aspartate 411) is a topological domain, extracellular. Residues 412-432 (VLASLLSISTLFIFTMMPIAL) form a helical membrane-spanning segment. Residues 433–450 (LVRRYYVRQDTPRVHLIK) lie on the Cytoplasmic side of the membrane. The chain crosses the membrane as a helical span at residues 451–471 (LITCLLFVVVSSMGTSAYWGM). Residues 472-477 (QRKGSW) are Extracellular-facing. The helical transmembrane segment at 478 to 498 (IGYTVTVPFWFLGTLGIVFFV) threads the bilayer. Residues 499–505 (PQQRTPK) lie on the Cytoplasmic side of the membrane. The helical transmembrane segment at 506 to 526 (VWGVPLVPWLPCLSIATNIFL) threads the bilayer. At 527–537 (MGSLGAMAFVR) the chain is on the extracellular side. Residues 538-558 (FGVCTLAMLLYYFLLGLHATF) form a helical membrane-spanning segment. Residues 559–569 (DMAHQQIVPRT) are Cytoplasmic-facing.

Belongs to the amino acid-polyamine-organocation (APC) superfamily. Cationic amino acid transporter (CAT) (TC 2.A.3.3) family. In terms of tissue distribution, expressed in roots, stems, flowers, seeds, and leaves. Mostly present in leaf rims and cotyledons of developing seedlings.

Its subcellular location is the cell membrane. Functionally, high-affinity permease involved in the transport of the cationic amino acids (e.g. arginine, and, to a lower extent, citrulline and glutamate). Transport mostly basic amino acids, and, to a lower extent neutral and acidic amino acids. The sequence is that of Cationic amino acid transporter 5 (CAT5) from Arabidopsis thaliana (Mouse-ear cress).